A 279-amino-acid chain; its full sequence is Undecaprenyl-diphosphatase (279 aa).

8 consecutive transmembrane segments (helical) span residues 2–22, 44–64, 85–105, 113–133, 163–183, 188–208, 223–243, and 255–275; these read LIIE…TEWL, AFIE…VMLI, WQLW…AVPL, FYFM…FIWI, VLSI…AIIL, TVAA…YSGL, AQVL…LLAI, and FTIF…YSFF.

This sequence belongs to the UppP family.

It is found in the cell membrane. It catalyses the reaction di-trans,octa-cis-undecaprenyl diphosphate + H2O = di-trans,octa-cis-undecaprenyl phosphate + phosphate + H(+). Catalyzes the dephosphorylation of undecaprenyl diphosphate (UPP). Confers resistance to bacitracin. The polypeptide is Undecaprenyl-diphosphatase (Streptococcus pyogenes serotype M12 (strain MGAS2096)).